Reading from the N-terminus, the 434-residue chain is ATP phosphoribosyltransferase regulatory subunit (434 aa).

The protein belongs to the class-II aminoacyl-tRNA synthetase family. HisZ subfamily. As to quaternary structure, heteromultimer composed of HisG and HisZ subunits.

Its subcellular location is the cytoplasm. Its pathway is amino-acid biosynthesis; L-histidine biosynthesis; L-histidine from 5-phospho-alpha-D-ribose 1-diphosphate: step 1/9. Required for the first step of histidine biosynthesis. May allow the feedback regulation of ATP phosphoribosyltransferase activity by histidine. The sequence is that of ATP phosphoribosyltransferase regulatory subunit from Geobacter metallireducens (strain ATCC 53774 / DSM 7210 / GS-15).